Consider the following 315-residue polypeptide: Acetyl-coenzyme A carboxylase carboxyl transferase subunit alpha (315 aa).

In terms of domain architecture, CoA carboxyltransferase C-terminal spans 39–293; it reads RLQDKSSTLT…RADLIEQLDM (255 aa).

It belongs to the AccA family. As to quaternary structure, acetyl-CoA carboxylase is a heterohexamer composed of biotin carboxyl carrier protein (AccB), biotin carboxylase (AccC) and two subunits each of ACCase subunit alpha (AccA) and ACCase subunit beta (AccD).

It is found in the cytoplasm. It catalyses the reaction N(6)-carboxybiotinyl-L-lysyl-[protein] + acetyl-CoA = N(6)-biotinyl-L-lysyl-[protein] + malonyl-CoA. The protein operates within lipid metabolism; malonyl-CoA biosynthesis; malonyl-CoA from acetyl-CoA: step 1/1. Component of the acetyl coenzyme A carboxylase (ACC) complex. First, biotin carboxylase catalyzes the carboxylation of biotin on its carrier protein (BCCP) and then the CO(2) group is transferred by the carboxyltransferase to acetyl-CoA to form malonyl-CoA. This Pseudomonas entomophila (strain L48) protein is Acetyl-coenzyme A carboxylase carboxyl transferase subunit alpha.